Reading from the N-terminus, the 341-residue chain is L-threonine 3-dehydrogenase (341 aa).

Cys38 contacts Zn(2+). Catalysis depends on charge relay system residues Thr40 and His43. 6 residues coordinate Zn(2+): His63, Glu64, Cys93, Cys96, Cys99, and Cys107. NAD(+) is bound by residues Ile175, Asp195, Arg200, 262–264 (LGI), and 286–287 (IY).

This sequence belongs to the zinc-containing alcohol dehydrogenase family. As to quaternary structure, homotetramer. Zn(2+) is required as a cofactor.

The protein resides in the cytoplasm. It carries out the reaction L-threonine + NAD(+) = (2S)-2-amino-3-oxobutanoate + NADH + H(+). It participates in amino-acid degradation; L-threonine degradation via oxydo-reductase pathway; glycine from L-threonine: step 1/2. In terms of biological role, catalyzes the NAD(+)-dependent oxidation of L-threonine to 2-amino-3-ketobutyrate. In Escherichia coli O139:H28 (strain E24377A / ETEC), this protein is L-threonine 3-dehydrogenase.